The following is a 268-amino-acid chain: CCAAT/enhancer-binding protein delta (268 aa).

Disordered regions lie at residues methionine 1 to threonine 48, glycine 97 to glycine 132, and alanine 152 to methionine 219. Serine 2 carries the N-acetylserine modification. A Glycyl lysine isopeptide (Lys-Gly) (interchain with G-Cter in SUMO) cross-link involves residue lysine 120. The segment covering proline 155–serine 167 has biased composition (pro residues). The segment covering valine 177–asparagine 201 has biased composition (basic and acidic residues). The bZIP domain maps to serine 191–leucine 254. The segment at arginine 195–lysine 222 is basic motif. The interval leucine 226 to leucine 254 is leucine-zipper.

Belongs to the bZIP family. C/EBP subfamily. In terms of assembly, binds DNA as a homodimer and as a heterodimer. Can form stable heterodimers with CEBPA, CEBPB and CEBPE. Directly interacts with SPI1/PU.1; this interaction does not affect DNA-binding properties of each partner. Interacts with PRDM16.

The protein localises to the nucleus. Functionally, transcription activator that recognizes two different DNA motifs: the CCAAT homology common to many promoters and the enhanced core homology common to many enhancers. Important transcription factor regulating the expression of genes involved in immune and inflammatory responses. Transcriptional activator that enhances IL6 transcription alone and as heterodimer with CEBPB. The chain is CCAAT/enhancer-binding protein delta (Cebpd) from Mus musculus (Mouse).